The chain runs to 595 residues: MLPKFDPTNQKACLSLLEDLTTNVKQIQDSVLEAILSRNAQTEYLRGFLNGQVDKQNFKKNVPVVTYEDIRSYIDRIANGEPSDLICDRPISVLLTSSGTSGGVPKLIPLTTEDLEQRISFSSLYAPLLYKHIDGLSEGKSLIFYFVTRESKTANGLMVRTMVTSFLKSIKQTNSFLWDSLQVSPHAITTCADTTQSMYCQLLCGLLERDNVARLGAPFASSFLKVIKFLEDHWPELCSNIRTGRLSDWITDATCTSGIGKFLTAPNPELASLIEQECSKTSWEAILKRLWPKAKCIESIITGTMAQYIPLLEFYSGGLPLTSSFYGSSECFMGVNFNPLCKPSDVSYTIIPCMGYFEFLEVEKDHQEAGHDPTEKPVVVDLVDVKIGHDYEPVVTTFSGLYRYRVGDVLRATGFYNNAPHFCFVGRQKVVLSIDMDKTYEDDLLKAVTNAKLLLEPHDLMLMDFTSRVDSSSFPGHYVIYWELGSKVKDAKFEPNRDVMEECCFTVEESLDAVYRKGRKNDKNIGPLEIKVVKPGAFDELMNFFLSRGSSVSQYKTPRSVTNEEALKILEANVISEFLSRKIPSWELHELHSGR.

ATP is bound by residues 97–98, threonine 302, and 325–330; these read SS and FYGSSE. Positions 325 and 332 each coordinate substrate. The ATP site is built by tyrosine 348 and aspartate 408.

Belongs to the IAA-amido conjugating enzyme family. In terms of tissue distribution, expressed in seedlings, roots, and parts of the siliques.

It catalyses the reaction (indol-3-yl)butanoate + L-cysteine + ATP = (indol-3-yl)butanoyl-L-cysteine + AMP + diphosphate + H(+). It carries out the reaction (indol-3-yl)butanoate + L-glutamine + ATP = (indol-3-yl)butanoyl-L-glutamine + AMP + diphosphate + H(+). The catalysed reaction is 4-(2,4-dichlorophenoxy)butanoate + L-glutamine + ATP = 4-(2,4-dichlorophenoxy)butanoyl-L-glutamine + AMP + diphosphate + H(+). Functionally, indole-3-acetic acid-amido (IAA) synthetase that catalyzes the conjugation of amino acids to auxin specifically using the auxin precursor indole-3-butyric acid (IBA) and glutamine and, possibly, cysteine as substrates. Displays high catalytic activity with the auxinic phenoxyalkanoic acid herbicides 4-(2,4-dichlorophenoxy)butyric acid (2,4-DB) and to some extent 2,4-dichlorophenoxylacetic acid (2,4-D) as substrates, thus conferring resistance to herbicides. The chain is Indole-3-acetic acid-amido synthetase GH3.15 from Arabidopsis thaliana (Mouse-ear cress).